Reading from the N-terminus, the 317-residue chain is Melanocyte-stimulating hormone receptor (317 aa).

The Extracellular portion of the chain corresponds to 1-37 (MPMHGAQRKLLGSLNSTPTATSNLGLAANHTGAPCLE). N-linked (GlcNAc...) asparagine glycosylation is present at N29. The chain crosses the membrane as a helical span at residues 38-63 (VSIPDGLFLSLGLVSLVENVLVVAAI). At 64–72 (AKNRNLHSS) the chain is on the cytoplasmic side. The helical transmembrane segment at 73 to 93 (MYCFICCLALSDLLVSGSNML) threads the bilayer. Residues 94-118 (ETAVILLLEAGALATRTSAMQQLHN) are Extracellular-facing. A helical membrane pass occupies residues 119–140 (TIDVLTCSSMLCSLCFLGAIAV). Over 141 to 163 (DRYISIFYALRYHSIMTLPRAQR) the chain is Cytoplasmic. A helical transmembrane segment spans residues 164-183 (AIAAIWVASXLSSTLFITYY). The Extracellular segment spans residues 184-191 (DHAAVLLC). A helical membrane pass occupies residues 192–211 (LVVFFLAMLVLMAVLYVHML). The Cytoplasmic segment spans residues 212–240 (ARACQHAHGIIRLHKRQTPAHQGFGLRGA). Residues 241–266 (ATLTILLGIFFLCWGPFFLHLTLVVF) form a helical membrane-spanning segment. Topologically, residues 267-279 (CPQHLTCSCIFKN) are extracellular. A helical membrane pass occupies residues 280–300 (FKVFLTLIICNTIIDPLIYAF). The Cytoplasmic portion of the chain corresponds to 301 to 317 (RSQELRRTLKEVLLCSW). C315 carries S-palmitoyl cysteine lipidation.

The protein belongs to the G-protein coupled receptor 1 family. As to quaternary structure, interacts with MGRN1, but does not undergo MGRN1-mediated ubiquitination; this interaction competes with GNAS-binding and thus inhibits agonist-induced cAMP production. Interacts with OPN3; the interaction results in a decrease in MC1R-mediated cAMP signaling and ultimately a decrease in melanin production in melanocytes.

The protein resides in the cell membrane. Its function is as follows. Receptor for MSH (alpha, beta and gamma) and ACTH. The activity of this receptor is mediated by G proteins which activate adenylate cyclase. Mediates melanogenesis, the production of eumelanin (black/brown) and phaeomelanin (red/yellow), via regulation of cAMP signaling in melanocytes. The chain is Melanocyte-stimulating hormone receptor (MC1R) from Saguinus midas (Golden-handed tamarin).